Consider the following 912-residue polypeptide: Protein translocase subunit SecA (912 aa).

ATP contacts are provided by residues Gln87, 105–109 (GEGKT), and Asp510. The tract at residues 854–912 (KLRHEQASAAQAEGEGDDGQQGQQATPETFVRQERKVGRNEPCPCGSGKKYKQCCGKVS) is disordered. Residues Cys896, Cys898, Cys907, and Cys908 each contribute to the Zn(2+) site.

This sequence belongs to the SecA family. In terms of assembly, monomer and homodimer. Part of the essential Sec protein translocation apparatus which comprises SecA, SecYEG and auxiliary proteins SecDF-YajC and YidC. Requires Zn(2+) as cofactor.

The protein localises to the cell inner membrane. Its subcellular location is the cytoplasm. The enzyme catalyses ATP + H2O + cellular proteinSide 1 = ADP + phosphate + cellular proteinSide 2.. Functionally, part of the Sec protein translocase complex. Interacts with the SecYEG preprotein conducting channel. Has a central role in coupling the hydrolysis of ATP to the transfer of proteins into and across the cell membrane, serving both as a receptor for the preprotein-SecB complex and as an ATP-driven molecular motor driving the stepwise translocation of polypeptide chains across the membrane. This chain is Protein translocase subunit SecA, found in Marinobacter nauticus (strain ATCC 700491 / DSM 11845 / VT8) (Marinobacter aquaeolei).